A 232-amino-acid chain; its full sequence is 2,3-bisphosphoglycerate-dependent phosphoglycerate mutase (232 aa).

Residues 10–17 (RHGESIWN), 23–24 (TG), R62, 89–92 (ERHY), K100, 116–117 (RR), and 185–186 (GN) contribute to the substrate site. The Tele-phosphohistidine intermediate role is filled by H11. E89 acts as the Proton donor/acceptor in catalysis.

This sequence belongs to the phosphoglycerate mutase family. BPG-dependent PGAM subfamily. As to quaternary structure, homodimer.

It catalyses the reaction (2R)-2-phosphoglycerate = (2R)-3-phosphoglycerate. The protein operates within carbohydrate degradation; glycolysis; pyruvate from D-glyceraldehyde 3-phosphate: step 3/5. Catalyzes the interconversion of 2-phosphoglycerate and 3-phosphoglycerate. This Buchnera aphidicola subsp. Baizongia pistaciae (strain Bp) protein is 2,3-bisphosphoglycerate-dependent phosphoglycerate mutase.